The primary structure comprises 152 residues: Snaclec coagulation factor IX/factor X-binding protein subunit A (152 aa).

A signal peptide spans M1–A23. Cystine bridges form between C25-C36, C53-C150, and C125-C142. The region spanning Y32 to E151 is the C-type lectin domain. Ca(2+) is bound by residues S64, E66, and E70. E151 serves as a coordination point for Ca(2+).

The protein belongs to the snaclec family. As to quaternary structure, heterodimer of subunits A and B; disulfide-linked. Expressed by the venom gland.

The protein resides in the secreted. Anticoagulant protein which binds to the gamma-carboxyglutamic acid-domain regions of factors IX (F9) and factor X (F10) in the presence of calcium with a 1 to 1 stoichiometry. In Gloydius halys (Chinese water mocassin), this protein is Snaclec coagulation factor IX/factor X-binding protein subunit A.